Reading from the N-terminus, the 454-residue chain is Lipase member H (454 aa).

Positions 1 to 23 (MIYRKIIWGILYVTLMLFDTHRA) are cleaved as a signal peptide. N-linked (GlcNAc...) asparagine glycans are attached at residues Asn73, Asn137, and Asn151. Ser161 serves as the catalytic Nucleophile. Asp185 acts as the Charge relay system in catalysis. Cys240 and Cys253 are disulfide-bonded. His255 acts as the Charge relay system in catalysis. Asn267 carries an N-linked (GlcNAc...) asparagine glycan. Cystine bridges form between Cys277/Cys288 and Cys291/Cys299. A glycan (N-linked (GlcNAc...) asparagine) is linked at Asn358. A disulfide bond links Cys430 and Cys449.

This sequence belongs to the AB hydrolase superfamily. Lipase family.

The protein localises to the secreted. Its subcellular location is the cell membrane. It catalyses the reaction 1-hexadecanoyl-2-(9Z-octadecenoyl)-sn-glycero-3-phosphate + H2O = 2-(9Z-octadecenoyl)-sn-glycero-3-phosphate + hexadecanoate + H(+). Hydrolyzes specifically phosphatidic acid (PA) to produce 2-acyl lysophosphatidic acid (LPA; a potent bioactive lipid mediator) and fatty acid. Does not hydrolyze other phospholipids, like phosphatidylserine (PS), phosphatidylcholine (PC) and phosphatidylethanolamine (PE) or triacylglycerol (TG). The protein is Lipase member H (liph) of Danio rerio (Zebrafish).